Reading from the N-terminus, the 260-residue chain is 2-amino-5-formylamino-6-ribosylaminopyrimidin-4(3H)-one 5'-monophosphate deformylase (260 aa).

The Fe cation site is built by glutamate 33, histidine 35, aspartate 44, and histidine 112.

It belongs to the creatininase superfamily. FAPy deformylase family. In terms of assembly, homodimer. Fe(2+) serves as cofactor. Zn(2+) is required as a cofactor.

It catalyses the reaction 2-amino-5-formylamino-6-(5-phospho-D-ribosylamino)pyrimidin-4(3H)-one + H2O = 2,5-diamino-6-(1-D-ribosylamino)pyrimidin-4(3H)-one 5'-phosphate + formate + H(+). Its pathway is cofactor biosynthesis; coenzyme F420 biosynthesis. It functions in the pathway cofactor biosynthesis; riboflavin biosynthesis. Catalyzes the hydrolysis of the formamide of 2-amino-5-formylamino-6-ribosylamino-4(3H)-pyrimidinone 5'-monophosphate (FAPy) to form 2,5-diamino-6-ribosylamino-4(3H)-pyrimidinone 5'-phosphate (APy). This chain is 2-amino-5-formylamino-6-ribosylaminopyrimidin-4(3H)-one 5'-monophosphate deformylase, found in Methanococcus voltae (strain ATCC BAA-1334 / A3).